The sequence spans 377 residues: Chaperone protein DnaJ (377 aa).

Positions 5-70 (DYYEILGVSK…QKRAAYDQYG (66 aa)) constitute a J domain. The CR-type zinc-finger motif lies at 132–210 (GVTKEIRIPT…CHGHGRVEKT (79 aa)). Positions 145, 148, 162, 165, 184, 187, 198, and 201 each coordinate Zn(2+). CXXCXGXG motif repeat units follow at residues 145–152 (CDVCHGSG), 162–169 (CPTCHGAG), 184–191 (CPHCQGRG), and 198–205 (CNKCHGHG).

It belongs to the DnaJ family. In terms of assembly, homodimer. Requires Zn(2+) as cofactor.

Its subcellular location is the cytoplasm. In terms of biological role, participates actively in the response to hyperosmotic and heat shock by preventing the aggregation of stress-denatured proteins and by disaggregating proteins, also in an autonomous, DnaK-independent fashion. Unfolded proteins bind initially to DnaJ; upon interaction with the DnaJ-bound protein, DnaK hydrolyzes its bound ATP, resulting in the formation of a stable complex. GrpE releases ADP from DnaK; ATP binding to DnaK triggers the release of the substrate protein, thus completing the reaction cycle. Several rounds of ATP-dependent interactions between DnaJ, DnaK and GrpE are required for fully efficient folding. Also involved, together with DnaK and GrpE, in the DNA replication of plasmids through activation of initiation proteins. The chain is Chaperone protein DnaJ from Klebsiella pneumoniae subsp. pneumoniae (strain ATCC 700721 / MGH 78578).